A 637-amino-acid polypeptide reads, in one-letter code: Glutamate--cysteine ligase catalytic subunit (637 aa).

The residue at position 1 (methionine 1) is an N-acetylmethionine. Phosphoserine is present on residues serine 5 and serine 8.

Belongs to the glutamate--cysteine ligase type 3 family. In terms of assembly, heterodimer of a catalytic heavy chain and a regulatory light chain.

It catalyses the reaction L-cysteine + L-glutamate + ATP = gamma-L-glutamyl-L-cysteine + ADP + phosphate + H(+). The enzyme catalyses (2S)-2-aminobutanoate + L-glutamate + ATP = gamma-L-glutamyl-(2S)-2-aminobutanoate + ADP + phosphate + H(+). Its pathway is sulfur metabolism; glutathione biosynthesis; glutathione from L-cysteine and L-glutamate: step 1/2. Feedback inhibition by glutathione. Catalyzes the ATP-dependent ligation of L-glutamate and L-cysteine and participates in the first and rate-limiting step in glutathione biosynthesis. The sequence is that of Glutamate--cysteine ligase catalytic subunit from Mus musculus (Mouse).